A 227-amino-acid chain; its full sequence is 2,3-bisphosphoglycerate-dependent phosphoglycerate mutase (227 aa).

Residues 7–14 (RHGFSEWN), 20–21 (TG), Arg-59, 86–89 (ERHY), Lys-97, 113–114 (RR), and 182–183 (GN) contribute to the substrate site. The active-site Tele-phosphohistidine intermediate is the His-8. Glu-86 functions as the Proton donor/acceptor in the catalytic mechanism.

Belongs to the phosphoglycerate mutase family. BPG-dependent PGAM subfamily. In terms of assembly, homodimer.

The catalysed reaction is (2R)-2-phosphoglycerate = (2R)-3-phosphoglycerate. It participates in carbohydrate degradation; glycolysis; pyruvate from D-glyceraldehyde 3-phosphate: step 3/5. In terms of biological role, catalyzes the interconversion of 2-phosphoglycerate and 3-phosphoglycerate. This Haemophilus influenzae (strain ATCC 51907 / DSM 11121 / KW20 / Rd) protein is 2,3-bisphosphoglycerate-dependent phosphoglycerate mutase.